A 254-amino-acid polypeptide reads, in one-letter code: Gamma-glutamyl-gamma-aminobutyrate hydrolase (254 aa).

The region spanning 16–250 (RNRLKGHATQ…ITAWQHHIAE (235 aa)) is the Glutamine amidotransferase type-1 domain. Cys114 (nucleophile) is an active-site residue. Residues His222 and Glu224 contribute to the active site.

Belongs to the peptidase C26 family.

It carries out the reaction 4-(gamma-L-glutamylamino)butanoate + H2O = 4-aminobutanoate + L-glutamate. It functions in the pathway amine and polyamine degradation; putrescine degradation; 4-aminobutanoate from putrescine: step 4/4. Involved in the breakdown of putrescine via hydrolysis of the gamma-glutamyl linkage of gamma-glutamyl-gamma-aminobutyrate. This Shigella flexneri protein is Gamma-glutamyl-gamma-aminobutyrate hydrolase (puuD).